Reading from the N-terminus, the 209-residue chain is Chaperone protein TorD (209 aa).

This sequence belongs to the TorD/DmsD family. TorD subfamily.

The protein localises to the cytoplasm. Its function is as follows. Involved in the biogenesis of TorA. Acts on TorA before the insertion of the molybdenum cofactor and, as a result, probably favors a conformation of the apoenzyme that is competent for acquiring the cofactor. The polypeptide is Chaperone protein TorD (Shewanella sp. (strain ANA-3)).